The sequence spans 437 residues: Trigger factor (437 aa).

Residues 163 to 248 (DDRVTVDFEG…VKKIEASHLP (86 aa)) enclose the PPIase FKBP-type domain.

This sequence belongs to the FKBP-type PPIase family. Tig subfamily.

The protein resides in the cytoplasm. It catalyses the reaction [protein]-peptidylproline (omega=180) = [protein]-peptidylproline (omega=0). In terms of biological role, involved in protein export. Acts as a chaperone by maintaining the newly synthesized protein in an open conformation. Functions as a peptidyl-prolyl cis-trans isomerase. This chain is Trigger factor, found in Variovorax paradoxus (strain S110).